The following is a 452-amino-acid chain: Putative zinc metalloprotease VC_2253 (452 aa).

Position 22 (histidine 22) interacts with Zn(2+). Glutamate 23 is a catalytic residue. Histidine 26 is a binding site for Zn(2+). A helical transmembrane segment spans residues 98–120; sequence SAIVSAGPIFNFLFAIFAYWLVF. A PDZ domain is found at 197–292; it reads NLRDWNFDPE…QVELTLIPDS (96 aa). The next 2 helical transmembrane spans lie at 378 to 400 and 428 to 447; these read FVYF…LVPL and MGYR…AIFN.

This sequence belongs to the peptidase M50B family. Zn(2+) serves as cofactor.

It is found in the cell inner membrane. The polypeptide is Putative zinc metalloprotease VC_2253 (Vibrio cholerae serotype O1 (strain ATCC 39315 / El Tor Inaba N16961)).